We begin with the raw amino-acid sequence, 278 residues long: 4-hydroxy-tetrahydrodipicolinate reductase (278 aa).

NAD(+)-binding positions include 13-18 and 111-113; these read GAAGKM and GTT. Residue H167 is the Proton donor/acceptor of the active site. H168 contributes to the (S)-2,3,4,5-tetrahydrodipicolinate binding site. K171 acts as the Proton donor in catalysis. 177-178 serves as a coordination point for (S)-2,3,4,5-tetrahydrodipicolinate; sequence GT.

It belongs to the DapB family.

Its subcellular location is the cytoplasm. It carries out the reaction (S)-2,3,4,5-tetrahydrodipicolinate + NAD(+) + H2O = (2S,4S)-4-hydroxy-2,3,4,5-tetrahydrodipicolinate + NADH + H(+). The enzyme catalyses (S)-2,3,4,5-tetrahydrodipicolinate + NADP(+) + H2O = (2S,4S)-4-hydroxy-2,3,4,5-tetrahydrodipicolinate + NADPH + H(+). It functions in the pathway amino-acid biosynthesis; L-lysine biosynthesis via DAP pathway; (S)-tetrahydrodipicolinate from L-aspartate: step 4/4. Catalyzes the conversion of 4-hydroxy-tetrahydrodipicolinate (HTPA) to tetrahydrodipicolinate. The chain is 4-hydroxy-tetrahydrodipicolinate reductase from Nostoc punctiforme (strain ATCC 29133 / PCC 73102).